The chain runs to 1037 residues: Glycine dehydrogenase (decarboxylating) 1, mitochondrial (1037 aa).

A mitochondrion-targeting transit peptide spans 1–67 (MERARRLAYR…AFGRHQQTRS (67 aa)). At Cys98 the chain carries S-glutathionyl cysteine; transient. S-glutathionyl cysteine is present on residues Cys402 and Cys463. N6-(pyridoxal phosphate)lysine is present on Lys774. 3 positions are modified to S-glutathionyl cysteine; transient: Cys777, Cys943, and Cys1022.

It belongs to the GcvP family. In terms of assembly, homodimer. The glycine cleavage system is composed of four proteins: P, T, L and H. It depends on pyridoxal 5'-phosphate as a cofactor. Glutathionylated at Cys-98, Cys-777, Cys-943 and Cys-1022 after S-nitrosoglutathione treatment. Post-translationally, S-nitrosylated at unknown positions by nitric oxide. In terms of tissue distribution, expressed in leaves. Detected in roots, stems, flowers and siliques.

It is found in the mitochondrion. It catalyses the reaction N(6)-[(R)-lipoyl]-L-lysyl-[glycine-cleavage complex H protein] + glycine + H(+) = N(6)-[(R)-S(8)-aminomethyldihydrolipoyl]-L-lysyl-[glycine-cleavage complex H protein] + CO2. Its activity is regulated as follows. Inhibited by harpin, S-nitrosoglutathione (GSNO), nitric oxide, N-ethylmaleimide and 5,5'-dithiobis-(2-nitrobenzoic acid). Functionally, the glycine decarboxylase (GDC) or glycine cleavage system catalyzes the degradation of glycine. The P protein binds the alpha-amino group of glycine through its pyridoxal phosphate cofactor; CO(2) is released and the remaining methylamine moiety is then transferred to the lipoamide cofactor of the H protein. This is Glycine dehydrogenase (decarboxylating) 1, mitochondrial (GLDP1) from Arabidopsis thaliana (Mouse-ear cress).